The following is a 79-amino-acid chain: Serine protease inhibitor Kazal-type 1-like (79 aa).

Residues 1–23 (MKVAIIFLLSALALLNLAGNTTA) form the signal peptide. Residues 26–79 (IGKKANCPNTLVGCPRDYDPVCGTDGKTYANECILCFENRKFGTSIRIQRRGLC) enclose the Kazal-like domain. Intrachain disulfides connect cysteine 32–cysteine 61, cysteine 39–cysteine 58, and cysteine 47–cysteine 79.

Seminal vesicle.

It is found in the secreted. Its function is as follows. Serine protease inhibitor which exhibits anti-trypsin activity. In the pancreas, protects against trypsin-catalyzed premature activation of zymogens. Functionally, in the male reproductive tract, binds to sperm heads where it modulates sperm capacitance by inhibiting calcium uptake and nitrogen oxide (NO) production. This is Serine protease inhibitor Kazal-type 1-like from Rattus norvegicus (Rat).